The chain runs to 326 residues: Probable sodium/potassium-transporting ATPase subunit beta-3 (326 aa).

Residues 1-59 lie on the Cytoplasmic side of the membrane; it reads MMSSRTRKIYLFVFMFISTSLQLMNGEAKAEPETFRQFLYNKQKGTVLGRTGTSWCQIT. A helical; Signal-anchor for type II membrane protein membrane pass occupies residues 60-80; the sequence is VFYIIFYIFLSAFFIGCLAIF. Over 81 to 326 the chain is Lumenal; sequence LKTLDPKVPR…DKKPVAAPAA (246 aa). 2 N-linked (GlcNAc...) asparagine glycosylation sites follow: N144 and N147. A disulfide bridge connects residues C234 and C291.

The protein belongs to the X(+)/potassium ATPases subunit beta family. As to quaternary structure, the sodium/potassium-transporting ATPase is composed of a catalytic alpha subunit, an auxiliary non-catalytic beta subunit and an additional regulatory subunit.

The protein localises to the cell membrane. Its function is as follows. This is the non-catalytic component of the active enzyme, which catalyzes the hydrolysis of ATP coupled with the exchange of Na(+) and K(+) ions across the plasma membrane. The beta subunit regulates, through assembly of alpha/beta heterodimers, the number of sodium pumps transported to the plasma membrane. Implicated in genomic response to various soil bacteria that affects fitness, lifespan and brood size. This is Probable sodium/potassium-transporting ATPase subunit beta-3 (nkb-3) from Caenorhabditis briggsae.